The chain runs to 405 residues: Terminal uridylyltransferase cid1 (405 aa).

UTP is bound at residue Ser-90. The Mg(2+) site is built by Asp-101 and Asp-103. 8 residues coordinate UTP: Ala-168, Asn-171, Thr-172, Lys-193, Lys-197, Ser-211, Tyr-212, and His-336. The region spanning 267–336 is the PAP-associated domain; sequence SLGSLLHGFF…AIEDPFEISH (70 aa). Arg-340 contacts ATP. The disordered stretch occupies residues 377-405; that stretch reads APIPPRRQKKTDEQSNKKLLNETDGDNSE. A compositionally biased stretch (basic and acidic residues) spans 386-397; the sequence is KTDEQSNKKLLN.

It belongs to the DNA polymerase type-B-like family. The cofactor is Mg(2+). Mn(2+) serves as cofactor.

It localises to the cytoplasm. The enzyme catalyses RNA(n) + UTP = RNA(n)-3'-uridine ribonucleotide + diphosphate. It carries out the reaction RNA(n) + ATP = RNA(n)-3'-adenine ribonucleotide + diphosphate. In terms of biological role, cytoplasmic uridylyltransferase that mediates the terminal uridylation of mRNAs with short poly(A) tails such as such as act1, hcn1 and urg1 mRNAs, hence facilitating global mRNA decay. Uridylates the 3' ends of actin mRNAs upon S-phase arrest. Also has a weak poly(A) polymerase (PAP) activity. Residue His-336 is responsible for the specificity for UTP. Involved in cell cycle arrest where in association with crb2/rhp9 and chk1 it inhibits unscheduled mitosis. This Schizosaccharomyces pombe (strain 972 / ATCC 24843) (Fission yeast) protein is Terminal uridylyltransferase cid1.